A 96-amino-acid polypeptide reads, in one-letter code: Large ribosomal subunit protein uL23 (96 aa).

The protein belongs to the universal ribosomal protein uL23 family. Part of the 50S ribosomal subunit. Contacts protein L29, and trigger factor when it is bound to the ribosome.

Its function is as follows. One of the early assembly proteins it binds 23S rRNA. One of the proteins that surrounds the polypeptide exit tunnel on the outside of the ribosome. Forms the main docking site for trigger factor binding to the ribosome. The chain is Large ribosomal subunit protein uL23 from Finegoldia magna (strain ATCC 29328 / DSM 20472 / WAL 2508) (Peptostreptococcus magnus).